The chain runs to 82 residues: Small ribosomal subunit protein bS20 (82 aa).

The protein belongs to the bacterial ribosomal protein bS20 family.

Functionally, binds directly to 16S ribosomal RNA. The chain is Small ribosomal subunit protein bS20 from Streptococcus suis (strain 98HAH33).